Here is a 263-residue protein sequence, read N- to C-terminus: Lens fiber major intrinsic protein (263 aa).

Residues 1 to 9 (MWELRSASF) lie on the Cytoplasmic side of the membrane. A helical membrane pass occupies residues 10–29 (WRAIFAEFFATLFYVFFGLG). At 30–41 (ASLRWTPGPLHV) the chain is on the extracellular side. Residues 42-59 (LQVALAFGLALATLVQAV) traverse the membrane as a helical segment. Over 60 to 61 (GH) the chain is Cytoplasmic. The discontinuously helical intramembrane region spans 62–77 (ISGAHVNPAVTFAFLV). Residues 68–70 (NPA) carry the NPA 1 motif. Topologically, residues 78–82 (GSQMS) are cytoplasmic. The chain crosses the membrane as a helical span at residues 83–106 (LLRAFCYMAAQLLGAVAGAAVLYS). At 107 to 127 (VTPPAVRGNLALNTLHPGVSV) the chain is on the extracellular side. Residues 128-148 (GQATTVEIFLTLQFVLCIFAT) traverse the membrane as a helical segment. At 149-156 (YDERRNGR) the chain is on the cytoplasmic side. Residues 157-175 (LGSVALAVGFSLTLGHLFG) traverse the membrane as a helical segment. Residues 176 to 178 (MYY) lie on the Extracellular side of the membrane. The discontinuously helical intramembrane region spans 179–193 (TGAGMNPARSFAPAI). The NPA 2 signature appears at 184–186 (NPA). The Extracellular segment spans residues 194 to 200 (LTRNFTN). A helical membrane pass occupies residues 201-222 (HWVYWVGPIIGGGLGSLLYDFL). Residues 223–263 (LFPRLKSVSERLSILKGARPSDSNGQPEGTGEPVELKTQAL) lie on the Cytoplasmic side of the membrane. The interaction with CALM stretch occupies residues 227-237 (LKSVSERLSIL). Ser-235, Ser-243, and Ser-245 each carry phosphoserine. The tract at residues 240–263 (ARPSDSNGQPEGTGEPVELKTQAL) is disordered. Asn-246 bears the Deamidated asparagine mark.

The protein belongs to the MIP/aquaporin (TC 1.A.8) family. Homotetramer; each monomer provides an independent water pore. Two homotetramers on opposing membranes can dimerize, forming a cell-cell junction. Interacts with CALM; the calcium-calmodulin/CALM complex interacts with the cytoplasmic domains of two aquaporins, leading to channel closure. Interacts with BFSP1 (via C-terminus); prevents calcium-dependent inhibition of the water channel activity. Post-translationally, subject to partial proteolytic cleavage in the eye lens core. Partial proteolysis promotes interactions between tetramers from adjoining membranes. In terms of processing, fatty acylated at Met-1 and Lys-238. The acyl modifications, in decreasing order of ion abundance, are: oleoyl (C18:1) &gt; palmitoyl (C16:0) &gt; stearoyl (C18:0) &gt; eicosenoyl (C20:1) &gt; dihomo-gamma-linolenoyl (C20:3) &gt; palmitoleoyl (C16:1) &gt; eicosadienoyl (C20:2).

The protein resides in the cell membrane. It localises to the cell junction. It carries out the reaction H2O(in) = H2O(out). The water channel activity is inhibited by calcium through calmodulin/CALM. Its function is as follows. Aquaporins form homotetrameric transmembrane channels, with each monomer independently mediating water transport across the plasma membrane along its osmotic gradient. Specifically expressed in lens fiber cells, this aquaporin is crucial for maintaining lens water homeostasis and transparency. Beyond water permeability, it also acts as a cell-to-cell adhesion molecule, forming thin junctions between lens fiber cells that are essential for maintaining the ordered structure and transparency of the lens. The protein is Lens fiber major intrinsic protein of Canis lupus familiaris (Dog).